The chain runs to 582 residues: Trans-activating transcriptional regulatory protein (582 aa).

The tract at residues 101–131 (QPVVEQPSPSSAYHAESFEHSAGVNQPSATG) is disordered.

Belongs to the nucleopolyhedrovirus IE-1 protein family. Homodimer. Interacts with helicase and LEF-3. In terms of processing, phosphorylated.

The protein localises to the host nucleus. Functionally, regulatory transcriptional protein, which trans-activates gene expression from early baculovirus promoters. Can also trans-activate its own promoter, suggesting an autoregulation during infection of host cells. Also promotes viral DNA genome replication via the N-terminal region. The protein is Trans-activating transcriptional regulatory protein (IE1) of Autographa californica nuclear polyhedrosis virus (AcMNPV).